Consider the following 260-residue polypeptide: Kallikrein-8 (260 aa).

Positions 1 to 28 (MGRPPPCAIQPWILLLLFMGAWAGLTRA) are cleaved as a signal peptide. The propeptide occupies 29–32 (QGSK). In terms of domain architecture, Peptidase S1 spans 33–257 (ILEGRECIPH…YTTWIKKTMD (225 aa)). Cystine bridges form between Cys39–Cys173, Cys58–Cys74, Cys145–Cys246, Cys152–Cys218, Cys184–Cys198, and Cys208–Cys233. His73 functions as the Charge relay system in the catalytic mechanism. A glycan (N-linked (GlcNAc...) asparagine) is linked at Asn110. Residue Asp120 is the Charge relay system of the active site. Residue Ser212 is the Charge relay system of the active site.

It belongs to the peptidase S1 family. Kallikrein subfamily. As to quaternary structure, interacts with SPINK9. As to expression, expressed in the limbic system of mouse brain and is localized at highest concentration in pyramidal neurons of the hippocampal CA1-3 subfields. Also detected in spinal cord gray matter and in keratinized stratified epithelia of epidermis, hair, tongue, palate, nasal cavity, pharynges, esophagus and forestomach. In skin and mucus membranes, expressed in stratum spinosum and stratum granulosum. Expressed during estrus in vaginal epithelial cells but not stromal cells. Within the vaginal epithelium, expressed in prickle cells, granular cells and parakeratotic cells but not in basal cells. Not expressed in uterus. Expressed in the keratinocytes.

The protein localises to the secreted. The protein resides in the cytoplasm. The catalysed reaction is Cleavage of amide substrates following the basic amino acids Arg or Lys at the P1 position, with a preference for Arg over Lys.. Its activity is regulated as follows. Strongly inhibited by diisopropyl fluorophosphate, leupeptin and (4-amidinophenyl)methanesulfonyl 1-fluoride. Functionally, serine protease which is capable of degrading a number of proteins such as casein, fibrinogen, kininogen, fibronectin and collagen type IV. Also cleaves L1CAM in response to increased neural activity. Induces neurite outgrowth and fasciculation of cultured hippocampal neurons. Plays a role in the formation and maturation of orphan and small synaptic boutons in the Schaffer-collateral pathway, regulates Schaffer-collateral long-term potentiation in the hippocampus and is required for memory acquisition and synaptic plasticity. Involved in skin desquamation and keratinocyte proliferation. Plays a role in the secondary phase of pathogenesis following spinal cord injury. The polypeptide is Kallikrein-8 (Klk8) (Mus musculus (Mouse)).